Here is a 412-residue protein sequence, read N- to C-terminus: WW domain-containing oxidoreductase (412 aa).

A disordered region spans residues 1–24 (MAALKYAGMEDTDSEDELPPGWEE). Positions 16-49 (DELPPGWEERSTKDGWVYYANHEEMKTQWEHPKT) constitute a WW 1 domain. Positions 50–55 (GKKKRC) match the Nuclear localization signal motif. One can recognise a WW 2 domain in the interval 57–90 (GALPYGWEQETDDKGQIFYVDHINKRKTYFDPRQ). 128-134 (GANSGIG) lines the NADP(+) pocket. Ser257 serves as a coordination point for substrate. Residue Tyr290 is the Proton acceptor of the active site.

The protein belongs to the short-chain dehydrogenases/reductases (SDR) family.

It localises to the cytoplasm. Its subcellular location is the mitochondrion. It is found in the golgi apparatus. The protein localises to the lysosome. In terms of biological role, putative oxidoreductase. Acts as a tumor suppressor and plays a role in apoptosis. May function synergistically with p53/TP53 to control genotoxic stress-induced cell death. Plays a role in TGFB1 signaling and TGFB1-mediated cell death. May also play a role in tumor necrosis factor (TNF)-mediated cell death. Required for normal bone development. Inhibits Wnt signaling. This is WW domain-containing oxidoreductase (wwox) from Danio rerio (Zebrafish).